Reading from the N-terminus, the 465-residue chain is Phosphomannomutase/phosphoglucomutase (465 aa).

The Phosphoserine intermediate role is filled by S110. Positions 110, 244, 246, and 248 each coordinate Mg(2+). 3 residues coordinate substrate: E327, S329, and H331.

Belongs to the phosphohexose mutase family. As to quaternary structure, monomer. Mg(2+) is required as a cofactor.

The enzyme catalyses alpha-D-mannose 1-phosphate = D-mannose 6-phosphate. The catalysed reaction is alpha-D-glucose 1-phosphate = alpha-D-glucose 6-phosphate. It functions in the pathway nucleotide-sugar biosynthesis; GDP-alpha-D-mannose biosynthesis; alpha-D-mannose 1-phosphate from D-fructose 6-phosphate: step 2/2. Its pathway is bacterial outer membrane biogenesis; lipopolysaccharide biosynthesis. The phosphomannomutase activity produces a precursor for alginate polymerization. The alginate layer causes a mucoid phenotype and provides a protective barrier against host immune defenses and antibiotics. Also involved in core-LPS biosynthesis due to its phosphoglucomutase activity. Essential for biofilm production. This chain is Phosphomannomutase/phosphoglucomutase (algC), found in Pseudomonas syringae pv. tomato (strain ATCC BAA-871 / DC3000).